Here is an 865-residue protein sequence, read N- to C-terminus: Leucine--tRNA ligase (865 aa).

A 'HIGH' region motif is present at residues 58-68; sequence PYPSGNLHMGH. The 'KMSKS' region motif lies at 629-633; sequence KMSKS. Position 632 (Lys632) interacts with ATP.

This sequence belongs to the class-I aminoacyl-tRNA synthetase family.

The protein resides in the cytoplasm. It carries out the reaction tRNA(Leu) + L-leucine + ATP = L-leucyl-tRNA(Leu) + AMP + diphosphate. The polypeptide is Leucine--tRNA ligase (Synechococcus sp. (strain ATCC 27144 / PCC 6301 / SAUG 1402/1) (Anacystis nidulans)).